The following is a 418-amino-acid chain: Tyrosine--tRNA ligase (418 aa).

Residue Tyr-34 participates in L-tyrosine binding. A 'HIGH' region motif is present at residues 39–48; sequence PTADSLHLGH. Tyr-169 and Gln-173 together coordinate L-tyrosine. The 'KMSKS' region signature appears at 229 to 233; the sequence is KFGKS. Position 232 (Lys-232) interacts with ATP. The 67-residue stretch at 352–418 folds into the S4 RNA-binding domain; it reads LNLVDMLVTA…GKKKYAVLTY (67 aa).

Belongs to the class-I aminoacyl-tRNA synthetase family. TyrS type 1 subfamily. As to quaternary structure, homodimer.

Its subcellular location is the cytoplasm. It catalyses the reaction tRNA(Tyr) + L-tyrosine + ATP = L-tyrosyl-tRNA(Tyr) + AMP + diphosphate + H(+). Its function is as follows. Catalyzes the attachment of tyrosine to tRNA(Tyr) in a two-step reaction: tyrosine is first activated by ATP to form Tyr-AMP and then transferred to the acceptor end of tRNA(Tyr). The sequence is that of Tyrosine--tRNA ligase from Streptococcus pyogenes serotype M3 (strain SSI-1).